The chain runs to 451 residues: uncharacterized protein (451 aa).

Mn(2+) contacts are provided by Asp-305, Asp-316, His-384, Glu-414, and Glu-428.

It belongs to the peptidase M24B family. Mn(2+) is required as a cofactor.

This is an uncharacterized protein from Schizosaccharomyces pombe (strain 972 / ATCC 24843) (Fission yeast).